A 255-amino-acid polypeptide reads, in one-letter code: 3-deoxy-manno-octulosonate cytidylyltransferase (255 aa).

It belongs to the KdsB family.

The protein resides in the cytoplasm. It carries out the reaction 3-deoxy-alpha-D-manno-oct-2-ulosonate + CTP = CMP-3-deoxy-beta-D-manno-octulosonate + diphosphate. The protein operates within nucleotide-sugar biosynthesis; CMP-3-deoxy-D-manno-octulosonate biosynthesis; CMP-3-deoxy-D-manno-octulosonate from 3-deoxy-D-manno-octulosonate and CTP: step 1/1. Its pathway is bacterial outer membrane biogenesis; lipopolysaccharide biosynthesis. Its function is as follows. Activates KDO (a required 8-carbon sugar) for incorporation into bacterial lipopolysaccharide in Gram-negative bacteria. This is 3-deoxy-manno-octulosonate cytidylyltransferase from Glaesserella parasuis serovar 5 (strain SH0165) (Haemophilus parasuis).